A 325-amino-acid polypeptide reads, in one-letter code: CRISPR-associated endonuclease Cas1 2 (325 aa).

Glutamate 145, histidine 212, and aspartate 225 together coordinate Mn(2+). Positions 283–325 (EEEDPVEEDPTRPGGLWDLEGEVEGGVAYGGDDPGEGAEEPEG) are disordered. Over residues 315 to 325 (DPGEGAEEPEG) the composition is skewed to acidic residues.

It belongs to the CRISPR-associated endonuclease Cas1 family. As to quaternary structure, homodimer, forms a heterotetramer with a Cas2 homodimer. It depends on Mg(2+) as a cofactor. The cofactor is Mn(2+).

CRISPR (clustered regularly interspaced short palindromic repeat), is an adaptive immune system that provides protection against mobile genetic elements (viruses, transposable elements and conjugative plasmids). CRISPR clusters contain spacers, sequences complementary to antecedent mobile elements, and target invading nucleic acids. CRISPR clusters are transcribed and processed into CRISPR RNA (crRNA). Acts as a dsDNA endonuclease. Involved in the integration of spacer DNA into the CRISPR cassette. The chain is CRISPR-associated endonuclease Cas1 2 from Thermus thermophilus (strain ATCC 27634 / DSM 579 / HB8).